The following is a 365-amino-acid chain: Membrane cofactor protein (365 aa).

The first 44 residues, 1-44 (MTAAPLMPDSTHPCRRRKSYTFFWCSLGVYAEALLFLLSHLSDA), serve as a signal peptide directing secretion. 4 consecutive Sushi domains span residues 45-106 (CELP…GCIK), 107-170 (VQCT…HCEK), 171-236 (IYCL…ECKV), and 237-296 (VKCP…KCLK). At 45 to 329 (CELPRPFEAM…GIFSQELDAW (285 aa)) the chain is on the extracellular side. Intrachain disulfides connect Cys-109-Cys-151, Cys-137-Cys-168, Cys-173-Cys-221, Cys-202-Cys-234, Cys-239-Cys-281, and Cys-267-Cys-294. N-linked (GlcNAc...) asparagine glycosylation occurs at Asn-181. Thr-205 carries O-linked (GalNAc...) threonine glycosylation. Thr-301 and Thr-304 each carry an O-linked (GalNAc...) threonine glycan. Asn-310 is a glycosylation site (N-linked (GlcNAc...) asparagine). Thr-312 carries O-linked (GalNAc...) threonine glycosylation. A helical membrane pass occupies residues 330–350 (IIALIVITSIVGVFILCLIVL). The Cytoplasmic portion of the chain corresponds to 351 to 365 (RCFEHRKKTNVSAAR).

As to quaternary structure, interacts with C3b. Interacts with C4b. Interacts with moesin/MSN. Post-translationally, may be O-glycosylated. In terms of processing, N-glycosylated. In terms of tissue distribution, present only in testis (at protein level).

It is found in the cytoplasmic vesicle. It localises to the secretory vesicle. Its subcellular location is the acrosome inner membrane. The protein localises to the secreted. May be involved in the fusion of the spermatozoa with the oocyte during fertilization. This chain is Membrane cofactor protein (Cd46), found in Mus musculus (Mouse).